Consider the following 396-residue polypeptide: Digeranylgeranylglycerophospholipid reductase (396 aa).

Residues Gly14, Glu33, Cys44, Gly45, Gly47, Arg100, Ala124, Glu162, Asp283, Gly295, and Ile296 each contribute to the FAD site. The a 2,3-bis-O-(geranylgeranyl)-sn-glycerol 1-phospholipid site is built by Lys338 and Val374.

The protein belongs to the geranylgeranyl reductase family. DGGGPL reductase subfamily. As to quaternary structure, monomer. It depends on FAD as a cofactor.

The protein localises to the cell membrane. It catalyses the reaction 2,3-bis-O-(phytanyl)-sn-glycerol 1-phosphate + 8 NADP(+) = 2,3-bis-O-(geranylgeranyl)-sn-glycerol 1-phosphate + 8 NADPH + 8 H(+). The catalysed reaction is 2,3-bis-O-(phytanyl)-sn-glycerol 1-phosphate + 8 NAD(+) = 2,3-bis-O-(geranylgeranyl)-sn-glycerol 1-phosphate + 8 NADH + 8 H(+). The enzyme catalyses a 2,3-bis-O-phytanyl-sn-glycerol 1-phospholipid + 8 A = a 2,3-bis-O-(geranylgeranyl)-sn-glycerol 1-phospholipid + 8 AH2. It carries out the reaction CDP-2,3-bis-O-(geranylgeranyl)-sn-glycerol + 8 AH2 = CDP-2,3-bis-O-(phytanyl)-sn-glycerol + 8 A. It catalyses the reaction archaetidylserine + 8 AH2 = 2,3-bis-O-phytanyl-sn-glycero-3-phospho-L-serine + 8 A. Its pathway is membrane lipid metabolism; glycerophospholipid metabolism. Functionally, is involved in the reduction of 2,3-digeranylgeranylglycerophospholipids (unsaturated archaeols) into 2,3-diphytanylglycerophospholipids (saturated archaeols) in the biosynthesis of archaeal membrane lipids. Catalyzes the formation of archaetidic acid (2,3-di-O-phytanyl-sn-glyceryl phosphate) from 2,3-di-O-geranylgeranylglyceryl phosphate (DGGGP) via the hydrogenation of each double bond of the isoprenoid chains. Can use both NADH and NADPH as electron donors. Also catalyzes the reduction of 2,3-di-O-geranylgeranylglyceryl phosphate analogs such as 2,3-di-O-phytyl-sn-glyceryl phosphate (DPHGP), 3-O-(2,3-di-O-phytyl-sn-glycero-phospho)-sn-glycerol (DPHGPG) and 2,3-di-O-phytyl-sn-glycero-phosphoethanolamine (DPHGPE). Is not active toward 2,3-di-O-geranylgeranylglycerol. Is also probably able to reduce double bonds of geranyl groups in CDP-2,3-bis-O-(geranylgeranyl)-sn-glycerol and archaetidylserine, thus acting at various stages in the biosynthesis of archaeal membrane lipids. In Thermoplasma acidophilum (strain ATCC 25905 / DSM 1728 / JCM 9062 / NBRC 15155 / AMRC-C165), this protein is Digeranylgeranylglycerophospholipid reductase.